We begin with the raw amino-acid sequence, 90 residues long: Probable Fe(2+)-trafficking protein (90 aa).

Belongs to the Fe(2+)-trafficking protein family.

Its function is as follows. Could be a mediator in iron transactions between iron acquisition and iron-requiring processes, such as synthesis and/or repair of Fe-S clusters in biosynthetic enzymes. This is Probable Fe(2+)-trafficking protein from Bordetella avium (strain 197N).